The primary structure comprises 104 residues: MKKRLLEDIAASSNSSLIKIIMAGEEDDLEMRGKIYGCDDYSPPVNWDSVMVMVERRERASKNVPNCPECGTEQVQLVHWQTNNLRYKCRHCKHRFDREENDKA.

This is an uncharacterized protein from Escherichia coli (Bacteriophage T4).